Reading from the N-terminus, the 183-residue chain is tRNA-splicing endonuclease (183 aa).

Residues tyrosine 120, histidine 128, and lysine 159 contribute to the active site.

The protein belongs to the tRNA-intron endonuclease family. Archaeal short subfamily. As to quaternary structure, homotetramer; although the tetramer contains four active sites, only two participate in the cleavage. Therefore, it should be considered as a dimer of dimers.

The catalysed reaction is pretRNA = a 3'-half-tRNA molecule with a 5'-OH end + a 5'-half-tRNA molecule with a 2',3'-cyclic phosphate end + an intron with a 2',3'-cyclic phosphate and a 5'-hydroxyl terminus.. In terms of biological role, endonuclease that removes tRNA introns. Cleaves pre-tRNA at the 5'- and 3'-splice sites to release the intron. The products are an intron and two tRNA half-molecules bearing 2',3' cyclic phosphate and 5'-OH termini. Recognizes a pseudosymmetric substrate in which 2 bulged loops of 3 bases are separated by a stem of 4 bp. In Pyrobaculum arsenaticum (strain DSM 13514 / JCM 11321 / PZ6), this protein is tRNA-splicing endonuclease.